The following is a 356-amino-acid chain: Phosphoribosylformylglycinamidine cyclo-ligase (356 aa).

This sequence belongs to the AIR synthase family.

It localises to the cytoplasm. The enzyme catalyses 2-formamido-N(1)-(5-O-phospho-beta-D-ribosyl)acetamidine + ATP = 5-amino-1-(5-phospho-beta-D-ribosyl)imidazole + ADP + phosphate + H(+). The protein operates within purine metabolism; IMP biosynthesis via de novo pathway; 5-amino-1-(5-phospho-D-ribosyl)imidazole from N(2)-formyl-N(1)-(5-phospho-D-ribosyl)glycinamide: step 2/2. The sequence is that of Phosphoribosylformylglycinamidine cyclo-ligase from Sinorhizobium medicae (strain WSM419) (Ensifer medicae).